Here is a 115-residue protein sequence, read N- to C-terminus: MQQEPDRNEQGYCSSPPSSNKQDSSDDTKKIQRREKNRIAAQKSRQRQTQKADSLHIESENLERLNSALRGEISGLREELKYLTCVLSTHQPVCVLGPTKPQAILPHVGSTRYQH.

The tract at residues Met1–Ile57 is disordered. The bZIP domain occupies Asp27–His90. Positions Lys29–Lys51 are basic motif. Positions Leu55–Leu83 are leucine-zipper.

It belongs to the bZIP family.

Its subcellular location is the nucleus. It is found in the cytoplasm. Its function is as follows. AP-1 family transcription factor that controls the differentiation of lineage-specific cells in the immune system: specifically mediates the differentiation of T-helper 17 cells (Th17), follicular T-helper cells (TfH), CD8(+) dendritic cells and class-switch recombination (CSR) in B-cells. The polypeptide is Basic leucine zipper transcriptional factor ATF-like (batf) (Xenopus tropicalis (Western clawed frog)).